Consider the following 126-residue polypeptide: Large ribosomal subunit protein bL12 (126 aa).

It belongs to the bacterial ribosomal protein bL12 family. Homodimer. Part of the ribosomal stalk of the 50S ribosomal subunit. Forms a multimeric L10(L12)X complex, where L10 forms an elongated spine to which 2 to 4 L12 dimers bind in a sequential fashion. Binds GTP-bound translation factors.

Forms part of the ribosomal stalk which helps the ribosome interact with GTP-bound translation factors. Is thus essential for accurate translation. In Geobacter sp. (strain M21), this protein is Large ribosomal subunit protein bL12.